We begin with the raw amino-acid sequence, 299 residues long: Oxygen-dependent coproporphyrinogen-III oxidase (299 aa).

Serine 92 provides a ligand contact to substrate. A divalent metal cation contacts are provided by histidine 96 and histidine 106. Histidine 106 serves as the catalytic Proton donor. 108–110 (NVR) lines the substrate pocket. A divalent metal cation contacts are provided by histidine 145 and histidine 175. The important for dimerization stretch occupies residues 240–275 (YVEFNLVWDRGTLFGLQTGGRTESILMSMPPLVRWE). 258–260 (GGR) is a binding site for substrate.

Belongs to the aerobic coproporphyrinogen-III oxidase family. In terms of assembly, homodimer. The cofactor is a divalent metal cation.

The protein resides in the cytoplasm. The catalysed reaction is coproporphyrinogen III + O2 + 2 H(+) = protoporphyrinogen IX + 2 CO2 + 2 H2O. It participates in porphyrin-containing compound metabolism; protoporphyrin-IX biosynthesis; protoporphyrinogen-IX from coproporphyrinogen-III (O2 route): step 1/1. Involved in the heme biosynthesis. Catalyzes the aerobic oxidative decarboxylation of propionate groups of rings A and B of coproporphyrinogen-III to yield the vinyl groups in protoporphyrinogen-IX. This Shigella flexneri protein is Oxygen-dependent coproporphyrinogen-III oxidase.